Consider the following 313-residue polypeptide: UPF0761 membrane protein VS_0126 (313 aa).

6 helical membrane passes run 41–61 (YLAY…LSIL), 104–124 (MTAV…SNID), 139–159 (AVLS…LIGA), 185–205 (VIRK…YLLV), 217–237 (AGSL…AAYI), and 249–269 (ALAA…IVLV). Residues 281 to 290 (EQWSDSQEMV) are compositionally biased toward polar residues. The tract at residues 281–313 (EQWSDSQEMVHSSDKDKITEQGNNSDSTDPESK) is disordered.

This sequence belongs to the UPF0761 family.

It localises to the cell inner membrane. This chain is UPF0761 membrane protein VS_0126, found in Vibrio atlanticus (strain LGP32) (Vibrio splendidus (strain Mel32)).